A 183-amino-acid chain; its full sequence is Shikimate kinase (183 aa).

14 to 19 is an ATP binding site; sequence GAGKTT. Threonine 18 contributes to the Mg(2+) binding site. Substrate is bound by residues aspartate 36, arginine 60, and glycine 82. Arginine 120 contributes to the ATP binding site. Substrate is bound at residue arginine 139. Glutamine 156 contacts ATP.

It belongs to the shikimate kinase family. As to quaternary structure, monomer. It depends on Mg(2+) as a cofactor.

The protein resides in the cytoplasm. It catalyses the reaction shikimate + ATP = 3-phosphoshikimate + ADP + H(+). The protein operates within metabolic intermediate biosynthesis; chorismate biosynthesis; chorismate from D-erythrose 4-phosphate and phosphoenolpyruvate: step 5/7. Catalyzes the specific phosphorylation of the 3-hydroxyl group of shikimic acid using ATP as a cosubstrate. The polypeptide is Shikimate kinase (Thiobacillus denitrificans (strain ATCC 25259 / T1)).